The following is a 398-amino-acid chain: tRNA-specific 2-thiouridylase MnmA (398 aa).

Residues 20–27 (AMSGGVDS) and Leu46 each bind ATP. Cys114 functions as the Nucleophile in the catalytic mechanism. An intrachain disulfide couples Cys114 to Cys210. ATP is bound at residue Gly138. An interaction with tRNA region spans residues 160-162 (RDQ). The active-site Cysteine persulfide intermediate is Cys210.

It belongs to the MnmA/TRMU family.

It localises to the cytoplasm. The catalysed reaction is S-sulfanyl-L-cysteinyl-[protein] + uridine(34) in tRNA + AH2 + ATP = 2-thiouridine(34) in tRNA + L-cysteinyl-[protein] + A + AMP + diphosphate + H(+). In terms of biological role, catalyzes the 2-thiolation of uridine at the wobble position (U34) of tRNA, leading to the formation of s(2)U34. This is tRNA-specific 2-thiouridylase MnmA from Brucella canis (strain ATCC 23365 / NCTC 10854 / RM-666).